The following is a 443-amino-acid chain: MITSSFSEKCTSVINGAPSWAVFFLFDLLDYFLCIVFRFLDEVMEEKSESCHCNNPREKTHFAEYEFLSETLYRRRNVFRQAGFLRFANKLPEITKKIGIVTFLRKFLFPHTMNKVSHEVANRWSDCGCKTCVSWINTDKLNVIVKQPSISDLSISNKPVENVIFVHGFLASSSFWTNTVFKYLPETTEGTNYRFFAIDLLGFGDSPKPRASQYSLKEHVEMIEKSVILPNNLTSFHVVAHSMGCIIGIALAAKFSDSVKSVALVAPPYFADSKGGASCAALDVVAKKKLWPPASFFTAMMCWYEHIGRGVCLVFCRHHRTWERIIKIVTWRRKLPTAIMDFTKHTHQSGWHSMHNVICGGAKFTDKHLETLIKSGVKINVMQGDKDVVVPIDCLSNMKGKFPAVEVEVIAGTDHSTVIMSRREVFAANLVSLWATSEKKQKV.

A signal peptide spans 1–52; the sequence is MITSSFSEKCTSVINGAPSWAVFFLFDLLDYFLCIVFRFLDEVMEEKSESCH. C53 carries the N-palmitoyl cysteine lipid modification. The 106-residue stretch at 163–268 folds into the AB hydrolase-1 domain; the sequence is VIFVHGFLAS…VKSVALVAPP (106 aa). H167 is a catalytic residue. S242 acts as the Nucleophile in catalysis. Catalysis depends on charge relay system residues D387 and H415.

It is found in the cell membrane. Its subcellular location is the secreted. It localises to the cell wall. In terms of biological role, involved in cuticle development and morphogenesis. This chain is Probable lysophospholipase BODYGUARD 5, found in Arabidopsis thaliana (Mouse-ear cress).